Consider the following 495-residue polypeptide: ATP synthase subunit alpha, chloroplastic (495 aa).

170-177 (GDRQTGKT) provides a ligand contact to ATP.

The protein belongs to the ATPase alpha/beta chains family. In terms of assembly, F-type ATPases have 2 components, CF(1) - the catalytic core - and CF(0) - the membrane proton channel. CF(1) has five subunits: alpha(3), beta(3), gamma(1), delta(1), epsilon(1). CF(0) has four main subunits: a, b, b' and c.

The protein localises to the plastid. Its subcellular location is the chloroplast thylakoid membrane. The catalysed reaction is ATP + H2O + 4 H(+)(in) = ADP + phosphate + 5 H(+)(out). Its function is as follows. Produces ATP from ADP in the presence of a proton gradient across the membrane. The alpha chain is a regulatory subunit. This is ATP synthase subunit alpha, chloroplastic from Cyanidioschyzon merolae (strain NIES-3377 / 10D) (Unicellular red alga).